A 59-amino-acid chain; its full sequence is UPF0181 protein YoaH (59 aa).

It belongs to the UPF0181 family.

The sequence is that of UPF0181 protein YoaH from Escherichia coli O127:H6 (strain E2348/69 / EPEC).